Reading from the N-terminus, the 974-residue chain is Ovochymase-2 (974 aa).

A signal peptide spans 1 to 21 (MAETSIFPIMMLTVMIGVGRG). The propeptide at 22-49 (VTDSPGRVSRCGERPAANTSVSYGLLSR) is activation peptide. A glycan (N-linked (GlcNAc...) asparagine) is linked at Asn39. Positions 50-299 (IVGGTSAVKG…LLNWLSENLN (250 aa)) constitute a Peptidase S1 1 domain. Cys75 and Cys91 are oxidised to a cystine. The active-site Charge relay system is His90. Ca(2+) contacts are provided by Val112 and Glu117. Asp140 acts as the Charge relay system in catalysis. Intrachain disulfides connect Cys174–Cys244, Cys205–Cys223, Cys234–Cys263, Cys312–Cys342, Cys369–Cys388, Cys435–Cys462, Cys489–Cys510, Cys615–Cys631, Cys713–Cys776, Cys741–Cys754, and Cys766–Cys795. Residue Ser238 is the Charge relay system of the active site. CUB domains lie at 312 to 425 (CSTN…YEAV) and 435 to 547 (CGSV…ISFV). Residues 590–819 (LIKAEEAMPN…FIPWIMETIL (230 aa)) form the Peptidase S1 2 domain. The propeptide at 590-974 (LIKAEEAMPN…WLSYSFHNQN (385 aa)) is activation peptide. Asn763 carries N-linked (GlcNAc...) asparagine glycosylation. The disordered stretch occupies residues 830–858 (EPHHPLFPPDKPSQQKALLPDSPPSSSSQ). A glycan (N-linked (GlcNAc...) asparagine) is linked at Asn926.

It belongs to the peptidase S1 family. The catalytically inactive 107 kDa form is processed both N- and C-terminally to give rise to the 66 kDa catalytically active form and inactive forms of 82 kDa and 59 kDa. As to expression, expressed specifically in the cells lining the bottom of epithelial folds in the oviductal pars recta.

It is found in the secreted. The enzyme catalyses Preferential cleavage at 371-Gly-Ser-Arg-|-Trp-374 of glycoprotein gp43 in Xenopus laevis coelemic egg envelope to yield gp41.. Mediates gamete interaction by affecting the vitelline coat. This is Ovochymase-2 (OVCH2) from Bufo japonicus (Japanese common toad).